A 1039-amino-acid polypeptide reads, in one-letter code: Integrin alpha-4 (1039 aa).

The first 40 residues, 1–40 (MFSTKSAWLRNGGADQGPRGIALREAVMLLLYFGVPTGPS), serve as a signal peptide directing secretion. Residues 41–983 (YNLDPENALL…LHHQRPKRHF (943 aa)) are Extracellular-facing. FG-GAP repeat units follow at residues 42 to 107 (NLDP…PNQT), 117 to 184 (SGEP…TELS), 193 to 244 (DYTR…QYKA), 246 to 298 (VDRQ…ENEL), 299 to 358 (NIVY…GAVM), 362 to 419 (ERVL…GISS), and 423 to 485 (QRIE…HPES). Asn-86, Asn-105, and Asn-145 each carry an N-linked (GlcNAc...) asparagine glycan. A disulfide bridge links Cys-98 with Cys-108. Disulfide bonds link Cys-151/Cys-172 and Cys-190/Cys-205. Asn-236 carries an N-linked (GlcNAc...) asparagine glycan. Residues Asp-321, Asn-323, Asp-325, Asp-329, Asp-384, Asp-386, Asp-388, Asp-392, Asp-446, Asp-448, Asn-450, Tyr-452, and Asp-454 each coordinate Ca(2+). The N-linked (GlcNAc...) asparagine glycan is linked to Asn-487. 2 disulfide bridges follow: Cys-493–Cys-502 and Cys-508–Cys-564. N-linked (GlcNAc...) asparagine glycosylation is found at Asn-525 and Asn-545. Residues 613–623 (KKEKDVIRKMI) carry the SG1 motif. A disulfide bridge connects residues Cys-629 and Cys-634. Asn-633, Asn-652, and Asn-667 each carry an N-linked (GlcNAc...) asparagine glycan. Cysteines 705 and 718 form a disulfide. 2 N-linked (GlcNAc...) asparagine glycosylation sites follow: Asn-813 and Asn-828. 2 cysteine pairs are disulfide-bonded: Cys-859/Cys-897 and Cys-904/Cys-909. Residues 984-1007 (TIIIITISLLLGLIVLLLISCVMW) traverse the membrane as a helical segment. At 1008–1039 (KAGFFKRQYKSILQEENRRDSWSYVNSKSNDD) the chain is on the cytoplasmic side. The GFFKR motif motif lies at 1010 to 1014 (GFFKR). Position 1028 is a phosphoserine (Ser-1028).

The protein belongs to the integrin alpha chain family. As to quaternary structure, heterodimer of an alpha and a beta subunit. The alpha subunit can sometimes be cleaved into two non-covalently associated fragments. Alpha-4 associates with either beta-1 or beta-7. Alpha-4 interacts with PXN, LPXN, and TGFB1I1/HIC5. Interacts with CSPG4 through CSPG4 chondroitin sulfate glycosaminoglycan. Interacts with JAML; integrin alpha-4/beta-1 may regulate leukocyte to endothelial cells adhesion by controlling JAML homodimerization. ITGA4:ITGB1 is found in a ternary complex with CX3CR1 and CX3CL1. Interacts with MDK. ITGA4:ITGB1 interacts with MDK; this interaction mediates MDK-induced osteoblast cells migration through PXN phosphorylation. Integrin ITGA4:ITGB1 interacts with SVEP1 (via Sushi domain 21); thereby inhibits Ca(2+) intracellular signaling and as a result represses vasocontraction. ITGA4:ITGB1 interacts with SELP. ITGA4:ITGB1 interacts with BCAM. Phosphorylation on Ser-1028 inhibits PXN binding. Expressed in the media layer of the arterial wall (at protein level). Weakly expression in the thymus, spleen and mesenteric lymph nodes.

Its subcellular location is the membrane. Integrins alpha-4/beta-1 (VLA-4 or LPAM-2) and alpha-4/beta-7 (LPAM-1) are receptors for fibronectin. They recognize one or more domains within the alternatively spliced CS-1 and CS-5 regions of fibronectin. They are also receptors for VCAM1. Integrin alpha-4/beta-1 recognizes the sequence Q-I-D-S in VCAM1. Integrin alpha-4/beta-7 is also a receptor for MADCAM1. It recognizes the sequence L-D-T in MADCAM1. On activated endothelial cells integrin VLA-4 triggers homotypic aggregation for most VLA-4-positive leukocyte cell lines. It may also participate in cytolytic T-cell interactions with target cells. ITGA4:ITGB1 binds to fractalkine (CX3CL1) and may act as its coreceptor in CX3CR1-dependent fractalkine signaling. ITGA4:ITGB1 binds to PLA2G2A via a site (site 2) which is distinct from the classical ligand-binding site (site 1) and this induces integrin conformational changes and enhanced ligand binding to site 1. Integrin ITGA4:ITGB1 represses PRKCA-mediated L-type voltage-gated channel Ca(2+) influx and ROCK-mediated calcium sensitivity in vascular smooth muscle cells via its interaction with SVEP1, thereby inhibiting vasocontraction. In Mus musculus (Mouse), this protein is Integrin alpha-4 (Itga4).